The primary structure comprises 448 residues: Asparagine--tRNA ligase (448 aa).

This sequence belongs to the class-II aminoacyl-tRNA synthetase family. In terms of assembly, homodimer.

Its subcellular location is the cytoplasm. It carries out the reaction tRNA(Asn) + L-asparagine + ATP = L-asparaginyl-tRNA(Asn) + AMP + diphosphate + H(+). The polypeptide is Asparagine--tRNA ligase (Streptococcus mutans serotype c (strain ATCC 700610 / UA159)).